Reading from the N-terminus, the 188-residue chain is Putative manganese efflux pump MntP (188 aa).

The next 6 membrane-spanning stretches (helical) occupy residues 2 to 22 (LYIE…AVSV), 40 to 60 (IASV…TMGL), 66 to 86 (ICAF…GKMI), 107 to 127 (LCGL…SLAI), 133 to 153 (LLQA…GVYF), and 167 to 187 (LIGG…HLFF).

The protein belongs to the MntP (TC 9.B.29) family.

The protein localises to the cell inner membrane. Probably functions as a manganese efflux pump. The sequence is that of Putative manganese efflux pump MntP from Parabacteroides distasonis (strain ATCC 8503 / DSM 20701 / CIP 104284 / JCM 5825 / NCTC 11152).